The following is a 1067-amino-acid chain: FHIP family protein GL19323 (1067 aa).

Residues 1–11 show a composition bias toward polar residues; the sequence is MSWLRSSPLRQ. Disordered regions lie at residues 1-31, 503-525, and 832-1013; these read MSWLRSSPLRQSGNGGGGGVSTGHSSTGSLR, LARPKSVHEQQPPSGATGEQPIQ, and NENS…SEPA. Phosphoserine is present on residues S508 and S835. Low complexity predominate over residues 842-858; it reads QPQTTLSQQQQQQQGQQ. Positions 859–878 are enriched in polar residues; it reads RSAYATLSAATPVQATQTSA. Over residues 893-904 the composition is skewed to low complexity; the sequence is SKSISSMFSRRS. Polar residues predominate over residues 918-949; the sequence is LVGNNNSGSGQSQPFSSTGTGTCETSLSTNPQ. The segment covering 950-979 has biased composition (low complexity); it reads SGAAAARSTGTATTANGNSSNSNISIGGST. Residues 980 to 996 are compositionally biased toward polar residues; the sequence is QTLSGHSNTTTYSSSTL.

Belongs to the FHIP family.

This Drosophila persimilis (Fruit fly) protein is FHIP family protein GL19323.